Consider the following 502-residue polypeptide: Probable cytosol aminopeptidase (502 aa).

Mn(2+)-binding residues include lysine 269 and aspartate 274. The active site involves lysine 281. Residues aspartate 292, aspartate 351, and glutamate 353 each contribute to the Mn(2+) site. Residue arginine 355 is part of the active site.

It belongs to the peptidase M17 family. It depends on Mn(2+) as a cofactor.

Its subcellular location is the cytoplasm. The enzyme catalyses Release of an N-terminal amino acid, Xaa-|-Yaa-, in which Xaa is preferably Leu, but may be other amino acids including Pro although not Arg or Lys, and Yaa may be Pro. Amino acid amides and methyl esters are also readily hydrolyzed, but rates on arylamides are exceedingly low.. It catalyses the reaction Release of an N-terminal amino acid, preferentially leucine, but not glutamic or aspartic acids.. In terms of biological role, presumably involved in the processing and regular turnover of intracellular proteins. Catalyzes the removal of unsubstituted N-terminal amino acids from various peptides. The protein is Probable cytosol aminopeptidase of Vibrio parahaemolyticus serotype O3:K6 (strain RIMD 2210633).